A 680-amino-acid polypeptide reads, in one-letter code: Tumor protein 63 (680 aa).

The tract at residues Met-1–Met-107 is transcription activation. Over residues Gln-123–Asp-157 the composition is skewed to polar residues. The disordered stretch occupies residues Gln-123–Tyr-171. A DNA-binding region spans residues Asp-170–Gln-362. Zn(2+) is bound by residues Cys-244, His-247, Cys-308, and Cys-312. Positions Asp-351 to Arg-360 are enriched in basic and acidic residues. Disordered stretches follow at residues Asp-351–Arg-393 and Arg-436–Met-472. An interaction with HIPK2 region spans residues Arg-352–Thr-388. Residues Arg-379–Ser-389 show a composition bias toward polar residues. The tract at residues Arg-394–His-443 is oligomerization. Over residues Gln-437–Ser-463 the composition is skewed to low complexity. The SAM domain occupies Pro-541–Leu-607. The segment at Phe-610 to Glu-680 is transactivation inhibition. A Glycyl lysine isopeptide (Lys-Gly) (interchain with G-Cter in SUMO) cross-link involves residue Lys-676.

It belongs to the p53 family. Binds DNA as a homotetramer. Isoform composition of the tetramer may determine transactivation activity. Interacts with HIPK2. Interacts with SSRP1, leading to stimulate coactivator activity. Interacts with PDS5A. Interacts (via activation domain) with NOC2L. Interacts with WWP1. The cofactor is Zn(2+). Post-translationally, may be sumoylated. Ubiquitinated. Polyubiquitination involves WWP1 and leads to proteasomal degradation of this protein. As to expression, widely expressed, notably in thymus, prostate, placenta and skeletal muscle, although the precise isoform varies according to tissue type. Progenitor cell layers of skin, breast and prostate express high levels of DeltaN-type isoforms.

It localises to the nucleus. In terms of biological role, acts as a sequence specific DNA binding transcriptional activator or repressor. The isoforms contain a varying set of transactivation and auto-regulating transactivation inhibiting domains thus showing an isoform specific activity. May be required in conjunction with TP73/p73 for initiation of p53/TP53 dependent apoptosis in response to genotoxic insults and the presence of activated oncogenes. Involved in Notch signaling by probably inducing JAG1 and JAG2. Activates transcription of the p21 promoter. Activates RIPK4 transcription. Plays a role in the regulation of epithelial morphogenesis. The ratio of DeltaN-type and TA*-type isoforms may govern the maintenance of epithelial stem cell compartments and regulate the initiation of epithelial stratification from the undifferentiated embryonal ectoderm. Required for limb formation from the apical ectodermal ridge. The sequence is that of Tumor protein 63 (Tp63) from Mus musculus (Mouse).